The chain runs to 345 residues: Phosphoribosylformylglycinamidine cyclo-ligase (345 aa).

This sequence belongs to the AIR synthase family.

It is found in the cytoplasm. It carries out the reaction 2-formamido-N(1)-(5-O-phospho-beta-D-ribosyl)acetamidine + ATP = 5-amino-1-(5-phospho-beta-D-ribosyl)imidazole + ADP + phosphate + H(+). The protein operates within purine metabolism; IMP biosynthesis via de novo pathway; 5-amino-1-(5-phospho-D-ribosyl)imidazole from N(2)-formyl-N(1)-(5-phospho-D-ribosyl)glycinamide: step 2/2. The protein is Phosphoribosylformylglycinamidine cyclo-ligase of Shewanella amazonensis (strain ATCC BAA-1098 / SB2B).